The chain runs to 513 residues: Histidine ammonia-lyase (513 aa).

Positions 144–146 (ASG) form a cross-link, 5-imidazolinone (Ala-Gly). Position 145 is a 2,3-didehydroalanine (Ser) (serine 145).

The protein belongs to the PAL/histidase family. In terms of processing, contains an active site 4-methylidene-imidazol-5-one (MIO), which is formed autocatalytically by cyclization and dehydration of residues Ala-Ser-Gly.

Its subcellular location is the cytoplasm. It carries out the reaction L-histidine = trans-urocanate + NH4(+). It functions in the pathway amino-acid degradation; L-histidine degradation into L-glutamate; N-formimidoyl-L-glutamate from L-histidine: step 1/3. The protein is Histidine ammonia-lyase of Streptococcus pyogenes serotype M1.